Consider the following 321-residue polypeptide: uncharacterized protein (321 aa).

Transmembrane regions (helical) follow at residues 6 to 26 (LFIG…MFPV), 37 to 57 (FYFS…LLLV), 72 to 92 (WIIL…FLGQ), 100 to 120 (IMTA…ILWG), 134 to 154 (ILIA…SFFF), 160 to 180 (LFSI…TMGG), 196 to 216 (CLFG…QGYV), 223 to 243 (VIAA…IIAL), 255 to 275 (SING…IMVI), and 277 to 297 (GYNI…GLIL). 2 consecutive EamA domains span residues 18 to 146 (MSWG…MVIT) and 175 to 300 (VYTM…LNNI).

The protein belongs to the EamA transporter family.

It is found in the cell membrane. This is an uncharacterized protein from Bacillus subtilis (strain 168).